A 94-amino-acid chain; its full sequence is Probable Fe(2+)-trafficking protein (94 aa).

The protein belongs to the Fe(2+)-trafficking protein family.

Its function is as follows. Could be a mediator in iron transactions between iron acquisition and iron-requiring processes, such as synthesis and/or repair of Fe-S clusters in biosynthetic enzymes. This is Probable Fe(2+)-trafficking protein from Alcanivorax borkumensis (strain ATCC 700651 / DSM 11573 / NCIMB 13689 / SK2).